A 403-amino-acid polypeptide reads, in one-letter code: SH3 and cysteine-rich domain-containing protein (403 aa).

Residues 1–51 are disordered; sequence MIPPSGAREDSGDGLTGEATGTEQPPSPASTSSLESKLQKLKRSLSFKTKS. A compositionally biased stretch (polar residues) spans 19 to 36; that stretch reads ATGTEQPPSPASTSSLES. The segment covering 39–51 has biased composition (basic residues); sequence QKLKRSLSFKTKS. The segment at 108-160 adopts a Phorbol-ester/DAG-type zinc-finger fold; that stretch reads LHAFQEHVFKKPTFCDVCNHMIVGTHAKHGLRCGACKMSIHHKCADGLAPQRC. Positions 212-264 are disordered; the sequence is QRTKKGGSGSGSDSPPRTSTSELVDVPEEADGPGDGSDMRTRSNSVFTYPENG. Positions 222–232 are enriched in low complexity; that stretch reads GSDSPPRTSTS. 2 SH3 domains span residues 286-345 and 348-403; these read LQMN…RVEE and KIYR…LVDV.

Interacts (via SH3 domains) with CACNA1S. Interacts with CACNA1H. Interacts with CACNA1C. Expressed predominantly in brain Detected in brain neurons, more specifically in hippocampus, cerebellum and inferior olive. Highly expressed in urinary bladder, and detected at lower levels in adrenal gland. Detected at very low levels in heart, liver, lung and kidney.

It localises to the cytoplasm. The protein resides in the cytosol. The protein localises to the cell membrane. It is found in the sarcolemma. Functionally, promotes expression of the ion channel CACNA1H at the cell membrane, and thereby contributes to the regulation of channel activity. Plays a minor and redundant role in promoting the expression of calcium channel CACNA1S at the cell membrane, and thereby contributes to increased channel activity. Slows the rate of calcium-mediated inactivation of CACNA1C calcium channel activity. The chain is SH3 and cysteine-rich domain-containing protein from Mus musculus (Mouse).